We begin with the raw amino-acid sequence, 413 residues long: CCA-adding enzyme (413 aa).

Positions 42 and 45 each coordinate ATP. 2 residues coordinate CTP: serine 42 and lysine 45. Mg(2+) is bound by residues aspartate 54, aspartate 56, and aspartate 107. Residues histidine 130, lysine 150, and tyrosine 159 each contribute to the ATP site. Histidine 130, lysine 150, and tyrosine 159 together coordinate CTP.

The protein belongs to the tRNA nucleotidyltransferase/poly(A) polymerase family. Archaeal CCA-adding enzyme subfamily. In terms of assembly, homodimer. Mg(2+) serves as cofactor.

The catalysed reaction is a tRNA precursor + 2 CTP + ATP = a tRNA with a 3' CCA end + 3 diphosphate. The enzyme catalyses a tRNA with a 3' CCA end + 2 CTP + ATP = a tRNA with a 3' CCACCA end + 3 diphosphate. Its function is as follows. Catalyzes the addition and repair of the essential 3'-terminal CCA sequence in tRNAs without using a nucleic acid template. Adds these three nucleotides in the order of C, C, and A to the tRNA nucleotide-73, using CTP and ATP as substrates and producing inorganic pyrophosphate. tRNA 3'-terminal CCA addition is required both for tRNA processing and repair. Also involved in tRNA surveillance by mediating tandem CCA addition to generate a CCACCA at the 3' terminus of unstable tRNAs. While stable tRNAs receive only 3'-terminal CCA, unstable tRNAs are marked with CCACCA and rapidly degraded. The polypeptide is CCA-adding enzyme (Sulfurisphaera tokodaii (strain DSM 16993 / JCM 10545 / NBRC 100140 / 7) (Sulfolobus tokodaii)).